The sequence spans 433 residues: Serine hydroxymethyltransferase (433 aa).

Residues Leu132 and 136 to 138 contribute to the (6S)-5,6,7,8-tetrahydrofolate site; that span reads GHL. Lys241 bears the N6-(pyridoxal phosphate)lysine mark.

This sequence belongs to the SHMT family. As to quaternary structure, homodimer. Requires pyridoxal 5'-phosphate as cofactor.

Its subcellular location is the cytoplasm. The catalysed reaction is (6R)-5,10-methylene-5,6,7,8-tetrahydrofolate + glycine + H2O = (6S)-5,6,7,8-tetrahydrofolate + L-serine. The protein operates within one-carbon metabolism; tetrahydrofolate interconversion. It participates in amino-acid biosynthesis; glycine biosynthesis; glycine from L-serine: step 1/1. Functionally, catalyzes the reversible interconversion of serine and glycine with tetrahydrofolate (THF) serving as the one-carbon carrier. This reaction serves as the major source of one-carbon groups required for the biosynthesis of purines, thymidylate, methionine, and other important biomolecules. Also exhibits THF-independent aldolase activity toward beta-hydroxyamino acids, producing glycine and aldehydes, via a retro-aldol mechanism. This chain is Serine hydroxymethyltransferase, found in Nitrobacter winogradskyi (strain ATCC 25391 / DSM 10237 / CIP 104748 / NCIMB 11846 / Nb-255).